We begin with the raw amino-acid sequence, 371 residues long: LIM domain-binding protein 2 (371 aa).

Disordered stretches follow at residues 244-289 (APPA…AAAN) and 325-371 (QYDA…QASQ). Low complexity predominate over residues 263–289 (STSSTSNSSAGNNANSTNSKKKSAAAN). The LIM interaction domain (LID) domain maps to 296–335 (DVMVVGEPTLMGGEFGDEDERLITRLENTQYDAANGMDDE). A compositionally biased stretch (polar residues) spans 339–371 (NNSPALGNNSPWNSKPPANQETKSENPTPQASQ).

It belongs to the LDB family. In terms of tissue distribution, first expressed at stages 15-16 in presumptive limb mesoderm. As limb outgrowth proceeds, expressed in the entire limb bud, concentrating in the distal mesoderm throughout limb development. Both hindlimbs and forelimbs exhibit similar expression patterns.

It is found in the nucleus. Binds to the LIM domain of a wide variety of LIM domain-containing transcription factors. The protein is LIM domain-binding protein 2 (LDB2) of Gallus gallus (Chicken).